The primary structure comprises 463 residues: tRNA dimethylallyltransferase 9 (463 aa).

Residue 57–64 (GPTGAGKS) coordinates ATP. 59-64 (TGAGKS) serves as a coordination point for substrate. Residues 82–85 (DSVQ) are interaction with substrate tRNA.

The protein belongs to the IPP transferase family. It depends on Mg(2+) as a cofactor. In terms of tissue distribution, expressed ubiquitously, with highest expression in proliferating tissues.

The protein localises to the cytoplasm. It carries out the reaction adenosine(37) in tRNA + dimethylallyl diphosphate = N(6)-dimethylallyladenosine(37) in tRNA + diphosphate. Its function is as follows. Catalyzes the transfer of a dimethylallyl group onto the adenine at position 37 in tRNAs that read codons beginning with uridine, leading to the formation of N6-(dimethylallyl)adenosine (i(6)A). Involved in the cis-type cytokinin biosynthesis. The chain is tRNA dimethylallyltransferase 9 (IPT9) from Arabidopsis thaliana (Mouse-ear cress).